Reading from the N-terminus, the 60-residue chain is Mastoparan-D (60 aa).

The first 27 residues, 1-27 (MKNTILILFTAFIALLGFFGMSAEALA), serve as a signal peptide directing secretion. AXPX repeat units follow at residues 27–30 (ADPI), 31–34 (ADPV), 35–38 (AGPN), and 41–44 (ADPE). Positions 28 to 45 (DPIADPVAGPNPEADPEA) are excised as a propeptide. Position 59 is a leucine amide (leucine 59).

This sequence belongs to the MCD family. Mastoparan subfamily. As to expression, expressed by the venom gland.

The protein localises to the secreted. It is found in the target cell membrane. In terms of biological role, antimicrobial and mast cell degranulating peptide. Has broad spectrum antibacterial activity against both Gram-positive and Gram-negative bacteria (S.aureus MIC=24-32 ug/ml, S.xylosus MIC=2 ug/ml, S.alactolyticus MIC=16 ug/ml, C.koseri MIC=4 ug/ml, E.coli MIC=8 ug/ml, K.pneumoniae MIC=32 ug/ml, P.aerugiosa MIC=128 ug/ml, S.choleraesuis MIC=16 ug/ml, S.typhimurium MIC=32 ug/ml, V.parahamelytics MIC=32 ug/ml). Affects membrane permeability of E.coli. Shows hemolytic activities on sheep, chicken and human erythrocytes. Its mast cell degranulation activity may be related to the activation of G-protein coupled receptors in mast cells as well as interaction with other proteins located in cell endosomal membranes in the mast cells. This chain is Mastoparan-D, found in Vespa ducalis (Black-tailed hornet).